The chain runs to 226 residues: Gap junction beta-2 protein (226 aa).

Residues 2–13 (DWGALQTILGGV) lie within the membrane without spanning it. Over 14 to 20 (NKHSTSI) the chain is Cytoplasmic. A helical membrane pass occupies residues 21–40 (GKIWLTVLFIFRIMILVVAA). At 41–73 (KEVWGDEQADFVCNTLQPGCKNVCYDHYFPISH) the chain is on the extracellular side. Ca(2+) contacts are provided by Glu42, Gly45, and Glu47. 3 disulfides stabilise this stretch: Cys53/Cys180, Cys60/Cys174, and Cys64/Cys169. Residues 74 to 94 (IRLWALQLIFVSTPALLVAMH) form a helical membrane-spanning segment. At 95 to 135 (VAYRRHEKKRKFIKGEIKSEFKDIEEIKTQKVRIEGSLWWT) the chain is on the cytoplasmic side. The helical transmembrane segment at 136–156 (YTSSIFFRVIFEAAFMYVFYV) threads the bilayer. The Extracellular segment spans residues 157–189 (MYDGFSMQRLVKCNAWPCPNTVDCFVSRPTEKT). The helical transmembrane segment at 190 to 210 (VFTVFMIAVSGICILLNVTEL) threads the bilayer. Residues 211-226 (CYLLIRYCSGRSKKPV) lie on the Cytoplasmic side of the membrane.

The protein belongs to the connexin family. Beta-type (group I) subfamily. As to quaternary structure, a hemichannel or connexon is composed of a hexamer of connexins. A functional gap junction is formed by the apposition of two hemichannels. Forms heteromeric channels with GJB4. Interacts with CNST.

The protein resides in the cell membrane. Its subcellular location is the cell junction. It localises to the gap junction. Its function is as follows. Structural component of gap junctions. Gap junctions are dodecameric channels that connect the cytoplasm of adjoining cells. They are formed by the docking of two hexameric hemichannels, one from each cell membrane. Small molecules and ions diffuse from one cell to a neighboring cell via the central pore. The chain is Gap junction beta-2 protein (GJB2) from Pongo pygmaeus (Bornean orangutan).